We begin with the raw amino-acid sequence, 176 residues long: Inorganic pyrophosphatase (176 aa).

Substrate-binding residues include lysine 30, arginine 44, and tyrosine 56. Mg(2+) is bound by residues aspartate 66, aspartate 71, and aspartate 103. Tyrosine 142 contacts substrate.

Belongs to the PPase family. Homohexamer. Mg(2+) is required as a cofactor.

Its subcellular location is the cytoplasm. It catalyses the reaction diphosphate + H2O = 2 phosphate + H(+). Catalyzes the hydrolysis of inorganic pyrophosphate (PPi) forming two phosphate ions. This is Inorganic pyrophosphatase from Escherichia coli O6:H1 (strain CFT073 / ATCC 700928 / UPEC).